The sequence spans 411 residues: Serine/threonine transporter SstT (411 aa).

9 consecutive transmembrane segments (helical) span residues 14 to 34 (GSLV…ASVA), 43 to 63 (FLGG…VFIL), 82 to 102 (IIML…VMSF), 141 to 161 (ALMS…GFAL), 192 to 212 (IGIF…ALAG), 218 to 238 (AVLL…IVFF), 290 to 310 (IPLG…VLTL), 330 to 350 (VVAA…LLLI), and 357 to 377 (FGIP…IGVI).

This sequence belongs to the dicarboxylate/amino acid:cation symporter (DAACS) (TC 2.A.23) family.

It localises to the cell inner membrane. It catalyses the reaction L-serine(in) + Na(+)(in) = L-serine(out) + Na(+)(out). The catalysed reaction is L-threonine(in) + Na(+)(in) = L-threonine(out) + Na(+)(out). In terms of biological role, involved in the import of serine and threonine into the cell, with the concomitant import of sodium (symport system). The protein is Serine/threonine transporter SstT of Photobacterium profundum (strain SS9).